Here is a 486-residue protein sequence, read N- to C-terminus: Betaine aldehyde dehydrogenase (486 aa).

Positions 23 and 90 each coordinate K(+). Residue 147–149 (GAW) coordinates NAD(+). The Charge relay system role is filled by Lys159. NAD(+) contacts are provided by residues 173–176 (KPSE) and 226–229 (ESGT). Residue Leu241 coordinates K(+). The active-site Proton acceptor is Glu247. The NAD(+) site is built by Gly249, Cys281, and Glu382. Cys281 (nucleophile) is an active-site residue. Cys281 bears the Cysteine sulfenic acid (-SOH) mark. The K(+) site is built by Lys452 and Gly455. Catalysis depends on Glu459, which acts as the Charge relay system.

Belongs to the aldehyde dehydrogenase family. In terms of assembly, dimer of dimers. Requires K(+) as cofactor.

It catalyses the reaction betaine aldehyde + NAD(+) + H2O = glycine betaine + NADH + 2 H(+). It functions in the pathway amine and polyamine biosynthesis; betaine biosynthesis via choline pathway; betaine from betaine aldehyde: step 1/1. Functionally, involved in the biosynthesis of the osmoprotectant glycine betaine. Catalyzes the irreversible oxidation of betaine aldehyde to the corresponding acid. The sequence is that of Betaine aldehyde dehydrogenase from Vibrio parahaemolyticus serotype O3:K6 (strain RIMD 2210633).